The following is a 672-amino-acid chain: tRNA 5-methylaminomethyl-2-thiouridine biosynthesis bifunctional protein MnmC (672 aa).

A tRNA (mnm(5)s(2)U34)-methyltransferase region spans residues 1 to 235; sequence MTRVLEPAEP…KRDMTVARFA (235 aa). Positions 259–672 are FAD-dependent cmnm(5)s(2)U34 oxidoreductase; it reads IGAGLAGCAV…SAGPGVDAAG (414 aa).

This sequence in the N-terminal section; belongs to the methyltransferase superfamily. tRNA (mnm(5)s(2)U34)-methyltransferase family. In the C-terminal section; belongs to the DAO family. FAD serves as cofactor.

It is found in the cytoplasm. It catalyses the reaction 5-aminomethyl-2-thiouridine(34) in tRNA + S-adenosyl-L-methionine = 5-methylaminomethyl-2-thiouridine(34) in tRNA + S-adenosyl-L-homocysteine + H(+). Its function is as follows. Catalyzes the last two steps in the biosynthesis of 5-methylaminomethyl-2-thiouridine (mnm(5)s(2)U) at the wobble position (U34) in tRNA. Catalyzes the FAD-dependent demodification of cmnm(5)s(2)U34 to nm(5)s(2)U34, followed by the transfer of a methyl group from S-adenosyl-L-methionine to nm(5)s(2)U34, to form mnm(5)s(2)U34. The chain is tRNA 5-methylaminomethyl-2-thiouridine biosynthesis bifunctional protein MnmC from Cupriavidus metallidurans (strain ATCC 43123 / DSM 2839 / NBRC 102507 / CH34) (Ralstonia metallidurans).